The chain runs to 396 residues: Phosphoglycerate kinase (396 aa).

Substrate is bound by residues 21–23, Arg-36, 59–62, Arg-118, and Arg-151; these read DFN and HLGR. ATP-binding positions include Lys-201, Gly-292, Glu-323, and 349–352; that span reads GGDS.

It belongs to the phosphoglycerate kinase family. Monomer.

The protein resides in the cytoplasm. It catalyses the reaction (2R)-3-phosphoglycerate + ATP = (2R)-3-phospho-glyceroyl phosphate + ADP. Its pathway is carbohydrate degradation; glycolysis; pyruvate from D-glyceraldehyde 3-phosphate: step 2/5. This chain is Phosphoglycerate kinase, found in Leptospira interrogans serogroup Icterohaemorrhagiae serovar Lai (strain 56601).